Here is a 131-residue protein sequence, read N- to C-terminus: Profilin (131 aa).

This sequence belongs to the profilin family. Occurs in many kinds of cells as a complex with monomeric actin in a 1:1 ratio.

The protein resides in the cytoplasm. Its subcellular location is the cytoskeleton. Its function is as follows. Binds to actin and affects the structure of the cytoskeleton. At high concentrations, profilin prevents the polymerization of actin, whereas it enhances it at low concentrations. By binding to PIP2, it inhibits the formation of IP3 and DG. This is Profilin from Citrus sinensis (Sweet orange).